Here is a 426-residue protein sequence, read N- to C-terminus: Serine--tRNA ligase (426 aa).

227–229 (TSE) provides a ligand contact to L-serine. Residues 258-260 (RKE) and Val274 contribute to the ATP site. Glu281 is an L-serine binding site. 345–348 (ELTS) is a binding site for ATP. Thr380 contacts L-serine.

Belongs to the class-II aminoacyl-tRNA synthetase family. Type-1 seryl-tRNA synthetase subfamily. In terms of assembly, homodimer. The tRNA molecule binds across the dimer.

It localises to the cytoplasm. It carries out the reaction tRNA(Ser) + L-serine + ATP = L-seryl-tRNA(Ser) + AMP + diphosphate + H(+). The catalysed reaction is tRNA(Sec) + L-serine + ATP = L-seryl-tRNA(Sec) + AMP + diphosphate + H(+). It functions in the pathway aminoacyl-tRNA biosynthesis; selenocysteinyl-tRNA(Sec) biosynthesis; L-seryl-tRNA(Sec) from L-serine and tRNA(Sec): step 1/1. Catalyzes the attachment of serine to tRNA(Ser). Is also able to aminoacylate tRNA(Sec) with serine, to form the misacylated tRNA L-seryl-tRNA(Sec), which will be further converted into selenocysteinyl-tRNA(Sec). This is Serine--tRNA ligase from Clavibacter michiganensis subsp. michiganensis (strain NCPPB 382).